The following is a 278-amino-acid chain: Truncated FRIGIDA-like protein 1 (278 aa).

Positions 1–36 (MTASETIATAINQIDEKKEKLKKAFDDLQAHRSLLS) form a coiled coil.

The protein belongs to the Frigida family.

In terms of biological role, truncated inactive FRIGIDA-like 1 protein. The chain is Truncated FRIGIDA-like protein 1 (FRL1) from Arabidopsis thaliana (Mouse-ear cress).